A 118-amino-acid polypeptide reads, in one-letter code: Small ribosomal subunit protein uS13 (118 aa).

Positions 94–118 (SLPLRGQRTKTNARTRKGPRKPIRK) are disordered.

Belongs to the universal ribosomal protein uS13 family. As to quaternary structure, part of the 30S ribosomal subunit. Forms a loose heterodimer with protein S19. Forms two bridges to the 50S subunit in the 70S ribosome.

Its function is as follows. Located at the top of the head of the 30S subunit, it contacts several helices of the 16S rRNA. In the 70S ribosome it contacts the 23S rRNA (bridge B1a) and protein L5 of the 50S subunit (bridge B1b), connecting the 2 subunits; these bridges are implicated in subunit movement. Contacts the tRNAs in the A and P-sites. The protein is Small ribosomal subunit protein uS13 of Shewanella woodyi (strain ATCC 51908 / MS32).